The primary structure comprises 120 residues: NAD(P)H-quinone oxidoreductase subunit 3, chloroplastic (120 aa).

The next 3 membrane-spanning stretches (helical) occupy residues 9–29 (IFWA…IISG), 64–84 (MFAL…PWAV), and 88–108 (VLGV…VVGS).

It belongs to the complex I subunit 3 family. In terms of assembly, NDH is composed of at least 16 different subunits, 5 of which are encoded in the nucleus.

The protein resides in the plastid. It is found in the chloroplast thylakoid membrane. The catalysed reaction is a plastoquinone + NADH + (n+1) H(+)(in) = a plastoquinol + NAD(+) + n H(+)(out). The enzyme catalyses a plastoquinone + NADPH + (n+1) H(+)(in) = a plastoquinol + NADP(+) + n H(+)(out). NDH shuttles electrons from NAD(P)H:plastoquinone, via FMN and iron-sulfur (Fe-S) centers, to quinones in the photosynthetic chain and possibly in a chloroplast respiratory chain. The immediate electron acceptor for the enzyme in this species is believed to be plastoquinone. Couples the redox reaction to proton translocation, and thus conserves the redox energy in a proton gradient. The polypeptide is NAD(P)H-quinone oxidoreductase subunit 3, chloroplastic (Nuphar advena (Common spatterdock)).